The chain runs to 358 residues: Protein ocs (358 aa).

Belongs to the lysopine/nopaline/octopine/opine/vitopine dehydrogenases family. As to quaternary structure, monomer.

It carries out the reaction D-octopine + NAD(+) + H2O = L-arginine + pyruvate + NADH + H(+). The catalysed reaction is D-lysopine + NADP(+) + H2O = L-lysine + pyruvate + NADPH + H(+). Its function is as follows. Reductive condensation of pyruvate and arginine, lysine, histidine, or octopine to form octopine, lysopine, histopine, or octopinic acid, respectively. NADPH is the preferred cofactor, but NADH can also be used. The protein is Protein ocs (ocs) of Agrobacterium tumefaciens (strain Ach5).